Reading from the N-terminus, the 136-residue chain is 6,7-dimethyl-8-ribityllumazine synthase (136 aa).

Residues phenylalanine 11, 43-45 (VYD), and 67-69 (CVI) each bind 5-amino-6-(D-ribitylamino)uracil. 72–73 (DT) provides a ligand contact to (2S)-2-hydroxy-3-oxobutyl phosphate. Catalysis depends on histidine 75, which acts as the Proton donor. Leucine 100 contacts 5-amino-6-(D-ribitylamino)uracil. Arginine 115 is a (2S)-2-hydroxy-3-oxobutyl phosphate binding site.

It belongs to the DMRL synthase family. In terms of assembly, forms an icosahedral capsid composed of 60 subunits, arranged as a dodecamer of pentamers.

It catalyses the reaction (2S)-2-hydroxy-3-oxobutyl phosphate + 5-amino-6-(D-ribitylamino)uracil = 6,7-dimethyl-8-(1-D-ribityl)lumazine + phosphate + 2 H2O + H(+). Its pathway is cofactor biosynthesis; riboflavin biosynthesis; riboflavin from 2-hydroxy-3-oxobutyl phosphate and 5-amino-6-(D-ribitylamino)uracil: step 1/2. Catalyzes the formation of 6,7-dimethyl-8-ribityllumazine by condensation of 5-amino-6-(D-ribitylamino)uracil with 3,4-dihydroxy-2-butanone 4-phosphate. This is the penultimate step in the biosynthesis of riboflavin. The polypeptide is 6,7-dimethyl-8-ribityllumazine synthase (Methanococcus aeolicus (strain ATCC BAA-1280 / DSM 17508 / OCM 812 / Nankai-3)).